Consider the following 228-residue polypeptide: 2-C-methyl-D-erythritol 4-phosphate cytidylyltransferase (228 aa).

The protein belongs to the IspD/TarI cytidylyltransferase family. IspD subfamily.

The catalysed reaction is 2-C-methyl-D-erythritol 4-phosphate + CTP + H(+) = 4-CDP-2-C-methyl-D-erythritol + diphosphate. It participates in isoprenoid biosynthesis; isopentenyl diphosphate biosynthesis via DXP pathway; isopentenyl diphosphate from 1-deoxy-D-xylulose 5-phosphate: step 2/6. Its function is as follows. Catalyzes the formation of 4-diphosphocytidyl-2-C-methyl-D-erythritol from CTP and 2-C-methyl-D-erythritol 4-phosphate (MEP). The chain is 2-C-methyl-D-erythritol 4-phosphate cytidylyltransferase from Trichormus variabilis (strain ATCC 29413 / PCC 7937) (Anabaena variabilis).